The primary structure comprises 116 residues: MIHGIGVDLIEISRIKNLYKRQSKLVDRILTINEQHKFNQFNNEQRKMEFLAGRFATKEAFSKALGSGLGKTVSFTDIDCVNDEDGKPCIHYEGYKVHVSISHTEHYAMSQVILEV.

The Mg(2+) site is built by aspartate 8 and glutamate 59.

It belongs to the P-Pant transferase superfamily. AcpS family. Mg(2+) is required as a cofactor.

Its subcellular location is the cytoplasm. It catalyses the reaction apo-[ACP] + CoA = holo-[ACP] + adenosine 3',5'-bisphosphate + H(+). Functionally, transfers the 4'-phosphopantetheine moiety from coenzyme A to a Ser of acyl-carrier-protein. The sequence is that of Holo-[acyl-carrier-protein] synthase from Staphylococcus saprophyticus subsp. saprophyticus (strain ATCC 15305 / DSM 20229 / NCIMB 8711 / NCTC 7292 / S-41).